Here is an 865-residue protein sequence, read N- to C-terminus: MSRFFRGGNESSSESSSDEEELYSEEEEEELEDEGDDSDNDGSGDDDSDSDSDADAGGKKKGAAKFLVDDDSSDEEDSDAEVTTKVKSAKDKRLDELESTVTAIANGMKINDWGSIATEFDKLNRQAEKLRTGTTAPKMYIKSIADLEDFMNETLAKQKVTPKKMNATNARGLNAVKQRIKKNNKEYQAQIDAYKADEFEFMMDTEDEEEPAPKPKKAAKVSFDEATAEDEEDDEGFARVGKGGKTLQFTPESIFKHLRSILESRGKKNTDRGEQIKIMEKLGEIAQTPYQRIRVLLALVSSRFDIGTSAGAALSVEHWKAAEKELSLLLTVLDENKDHIVLESAEEWDDDEKPPTLEKGEKYIKIPGSIVSYTERLDDELTRSLQAIDPHTSEYIDRLSDEGALYNIIFRAQLYYEGLRKDASLEIPQESLNRAIMRRLDHVYFKPAQVIKILEENSWKAVGDKASNITPREQTVEAAQLVNVLCNYLFANSEGIHRARAMLCQIYFLALHDDYYKSRDMMLMSHLQETISSFDVLTQILYNRTLVQVGLCAFRKGLVYDAQNTLQDICGSGRQKELLAQGVMIQRFNQVSPEQERLERQRQLPFHMHINLELLECVYLTCSMLLEIPLLAQTGSSPDIKKRIISKTYRRMLEYHERQIFTGPPENTRDHVMQASKALAAGEWKKATSFIHSIKIWELMPNADAIKTMLAKQIQEEGLRTYLFTYAPFYDTLSIETLSNMFELESTKISAVVSKMISHEELAAALDQVKQTVIFRKGVELSRLQSLALTLSDKASSLIESNERTLEQRTQGTSNAFERQGGRGGRGGGRGRGGGRGGPRFGGNTQRQAGGTQFTGGALGAAVRA.

2 disordered regions span residues 1–92 (MSRF…AKDK) and 206–243 (EDEEEPAPKPKKAAKVSFDEATAEDEEDDEGFARVGKG). 2 stretches are compositionally biased toward acidic residues: residues 16–54 (SSDEEELYSEEEEEELEDEGDDSDNDGSGDDDSDSDSDA) and 69–80 (DDDSSDEEDSDA). Over residues 82 to 92 (VTTKVKSAKDK) the composition is skewed to basic and acidic residues. The segment covering 226–235 (ATAEDEEDDE) has biased composition (acidic residues). Residues 606–780 (FHMHINLELL…QTVIFRKGVE (175 aa)) form the PCI domain. The interval 801–865 (SNERTLEQRT…GGALGAAVRA (65 aa)) is disordered. Residues 808-817 (QRTQGTSNAF) show a composition bias toward polar residues. A compositionally biased stretch (gly residues) spans 822 to 841 (GRGGRGGGRGRGGGRGGPRF).

It belongs to the eIF-3 subunit C family. As to quaternary structure, component of the eukaryotic translation initiation factor 3 (eIF-3) complex.

It is found in the cytoplasm. Its function is as follows. Component of the eukaryotic translation initiation factor 3 (eIF-3) complex, which is involved in protein synthesis of a specialized repertoire of mRNAs and, together with other initiation factors, stimulates binding of mRNA and methionyl-tRNAi to the 40S ribosome. The eIF-3 complex specifically targets and initiates translation of a subset of mRNAs involved in cell proliferation. The sequence is that of Eukaryotic translation initiation factor 3 subunit C from Pyricularia oryzae (strain 70-15 / ATCC MYA-4617 / FGSC 8958) (Rice blast fungus).